Reading from the N-terminus, the 159-residue chain is Pathogenesis-related leaf protein 4 (159 aa).

The N-terminal stretch at 1–24 (MGLFNISLLLTCLMVLAIFHSCEA) is a signal peptide. Q25 bears the Pyrrolidone carboxylic acid mark. Residues 32–147 (LAVHNDARAQ…NGWWFISCNY (116 aa)) enclose the SCP domain. Disulfide bonds link C68/C136, C109/C115, and C131/C145.

It belongs to the CRISP family.

Functionally, probably involved in the defense reaction of plants against pathogens. The polypeptide is Pathogenesis-related leaf protein 4 (Solanum lycopersicum (Tomato)).